The chain runs to 181 residues: ATP-dependent protease subunit HslV (181 aa).

Residue threonine 7 is part of the active site. Residues alanine 162, cysteine 165, and threonine 168 each coordinate Na(+).

It belongs to the peptidase T1B family. HslV subfamily. A double ring-shaped homohexamer of HslV is capped on each side by a ring-shaped HslU homohexamer. The assembly of the HslU/HslV complex is dependent on binding of ATP.

The protein resides in the cytoplasm. It catalyses the reaction ATP-dependent cleavage of peptide bonds with broad specificity.. With respect to regulation, allosterically activated by HslU binding. Its function is as follows. Protease subunit of a proteasome-like degradation complex believed to be a general protein degrading machinery. This Coxiella burnetii (strain RSA 331 / Henzerling II) protein is ATP-dependent protease subunit HslV.